The sequence spans 223 residues: Deoxyribose-phosphate aldolase (223 aa).

Asp89 functions as the Proton donor/acceptor in the catalytic mechanism. Residue Lys152 is the Schiff-base intermediate with acetaldehyde of the active site. Lys181 (proton donor/acceptor) is an active-site residue.

It belongs to the DeoC/FbaB aldolase family. DeoC type 1 subfamily.

It is found in the cytoplasm. It catalyses the reaction 2-deoxy-D-ribose 5-phosphate = D-glyceraldehyde 3-phosphate + acetaldehyde. Its pathway is carbohydrate degradation; 2-deoxy-D-ribose 1-phosphate degradation; D-glyceraldehyde 3-phosphate and acetaldehyde from 2-deoxy-alpha-D-ribose 1-phosphate: step 2/2. Catalyzes a reversible aldol reaction between acetaldehyde and D-glyceraldehyde 3-phosphate to generate 2-deoxy-D-ribose 5-phosphate. In Listeria monocytogenes serovar 1/2a (strain ATCC BAA-679 / EGD-e), this protein is Deoxyribose-phosphate aldolase.